A 104-amino-acid polypeptide reads, in one-letter code: Small ribosomal subunit protein uS10 (104 aa).

Belongs to the universal ribosomal protein uS10 family. As to quaternary structure, part of the 30S ribosomal subunit.

Functionally, involved in the binding of tRNA to the ribosomes. The polypeptide is Small ribosomal subunit protein uS10 (Gloeobacter violaceus (strain ATCC 29082 / PCC 7421)).